Consider the following 549-residue polypeptide: ATP synthase subunit alpha (549 aa).

172–179 (GDRKTGKT) contributes to the ATP binding site.

It belongs to the ATPase alpha/beta chains family. F-type ATPases have 2 components, CF(1) - the catalytic core - and CF(0) - the membrane proton channel. CF(1) has five subunits: alpha(3), beta(3), gamma(1), delta(1), epsilon(1). CF(0) has three main subunits: a(1), b(2) and c(9-12). The alpha and beta chains form an alternating ring which encloses part of the gamma chain. CF(1) is attached to CF(0) by a central stalk formed by the gamma and epsilon chains, while a peripheral stalk is formed by the delta and b chains.

The protein localises to the cell membrane. It carries out the reaction ATP + H2O + 4 H(+)(in) = ADP + phosphate + 5 H(+)(out). In terms of biological role, produces ATP from ADP in the presence of a proton gradient across the membrane. The alpha chain is a regulatory subunit. The sequence is that of ATP synthase subunit alpha from Mycobacterium tuberculosis (strain CDC 1551 / Oshkosh).